We begin with the raw amino-acid sequence, 635 residues long: Threonine--tRNA ligase (635 aa).

Residues 1–61 (MVSIRLPDGS…DHDASLAIVT (61 aa)) enclose the TGS domain. Residues 242–533 (DHRKLGKQLD…LIEHHAGAMP (292 aa)) are catalytic. Positions 333, 384, and 510 each coordinate Zn(2+).

This sequence belongs to the class-II aminoacyl-tRNA synthetase family. Homodimer. Zn(2+) serves as cofactor.

It localises to the cytoplasm. The enzyme catalyses tRNA(Thr) + L-threonine + ATP = L-threonyl-tRNA(Thr) + AMP + diphosphate + H(+). Its function is as follows. Catalyzes the attachment of threonine to tRNA(Thr) in a two-step reaction: L-threonine is first activated by ATP to form Thr-AMP and then transferred to the acceptor end of tRNA(Thr). Also edits incorrectly charged L-seryl-tRNA(Thr). The sequence is that of Threonine--tRNA ligase from Burkholderia multivorans (strain ATCC 17616 / 249).